The following is an 837-amino-acid chain: Protein ROD1 (837 aa).

Serine 138 and serine 141 each carry phosphoserine. Lysine 401 is covalently cross-linked (Glycyl lysine isopeptide (Lys-Gly) (interchain with G-Cter in ubiquitin)). Phosphoserine is present on serine 436. The short motif at 487-490 (PPNY) is the PY-motif element. Serine 536 carries the phosphoserine modification. The PY-motif signature appears at 656 to 659 (PPAY). Disordered stretches follow at residues 675–726 (ERPQ…SVSL) and 763–837 (SFTS…RDRS). A compositionally biased stretch (low complexity) spans 685-703 (TSSLLPLPGSSKSSNNLKR). Residues 716–726 (PRNNSGSSVSL) show a composition bias toward polar residues. Serine 720 and serine 725 each carry phosphoserine. Positions 763–773 (SFTSNSSSKNN) are enriched in low complexity. Residues 774–792 (SHFDKTDSTSDANKPREEE) are compositionally biased toward basic and acidic residues. Over residues 805–815 (SSSVRSNNSNS) the composition is skewed to low complexity.

The protein belongs to the arrestin family. In terms of assembly, interacts with RSP5 via its 2 PY-motifs.

The protein resides in the membrane. Functionally, mediates resistance to o-dinitrobenzene, calcium and zinc. The chain is Protein ROD1 (ROD1) from Saccharomyces cerevisiae (strain ATCC 204508 / S288c) (Baker's yeast).